Reading from the N-terminus, the 134-residue chain is Late embryogenesis abundant protein 6 (134 aa).

Residues 31–45 (ERAMARTKEEKEIAH) show a composition bias toward basic and acidic residues. Disordered regions lie at residues 31–53 (ERAM…AKEA) and 80–134 (VTDH…HHHY). Positions 34-70 (MARTKEEKEIAHQRRKAKEAEANMDMHMAKAAHAEDK) form a coiled coil. Low complexity predominate over residues 115–127 (PPQTYHPTYPPTG).

This sequence belongs to the LEA type 1 family.

Its function is as follows. Involved dehydration tolerance. Involved in the adaptive response of vascular plants to withstand water deficit. May possess chaperone-like activity under water deficit. This chain is Late embryogenesis abundant protein 6, found in Arabidopsis thaliana (Mouse-ear cress).